We begin with the raw amino-acid sequence, 545 residues long: CTP synthase (545 aa).

The amidoligase domain stretch occupies residues 1–266; sequence MTTNYIFVTG…DDLVCARFGI (266 aa). S14 is a CTP binding site. S14 contacts UTP. Residues 15–20 and D72 each bind ATP; that span reads SLGKGI. Mg(2+) contacts are provided by D72 and E140. Residues 147-149, 187-192, and K223 each bind CTP; these read DIE and KTKPTQ. UTP contacts are provided by residues 187–192 and K223; that span reads KTKPTQ. 239-241 serves as a coordination point for ATP; sequence KDV. Residues 291-542 form the Glutamine amidotransferase type-1 domain; it reads TIGMVGKYIE…IKAAGENARG (252 aa). G352 lines the L-glutamine pocket. C379 acts as the Nucleophile; for glutamine hydrolysis in catalysis. L-glutamine is bound by residues 380 to 383, E403, and R470; that span reads LGMQ. Catalysis depends on residues H515 and E517.

The protein belongs to the CTP synthase family. Homotetramer.

The catalysed reaction is UTP + L-glutamine + ATP + H2O = CTP + L-glutamate + ADP + phosphate + 2 H(+). It carries out the reaction L-glutamine + H2O = L-glutamate + NH4(+). It catalyses the reaction UTP + NH4(+) + ATP = CTP + ADP + phosphate + 2 H(+). The protein operates within pyrimidine metabolism; CTP biosynthesis via de novo pathway; CTP from UDP: step 2/2. Allosterically activated by GTP, when glutamine is the substrate; GTP has no effect on the reaction when ammonia is the substrate. The allosteric effector GTP functions by stabilizing the protein conformation that binds the tetrahedral intermediate(s) formed during glutamine hydrolysis. Inhibited by the product CTP, via allosteric rather than competitive inhibition. Catalyzes the ATP-dependent amination of UTP to CTP with either L-glutamine or ammonia as the source of nitrogen. Regulates intracellular CTP levels through interactions with the four ribonucleotide triphosphates. This is CTP synthase from Vibrio vulnificus (strain CMCP6).